A 229-amino-acid chain; its full sequence is Urease accessory protein UreF (229 aa).

Belongs to the UreF family. In terms of assembly, ureD, UreF and UreG form a complex that acts as a GTP-hydrolysis-dependent molecular chaperone, activating the urease apoprotein by helping to assemble the nickel containing metallocenter of UreC. The UreE protein probably delivers the nickel.

The protein resides in the cytoplasm. In terms of biological role, required for maturation of urease via the functional incorporation of the urease nickel metallocenter. The polypeptide is Urease accessory protein UreF (Methylobacterium radiotolerans (strain ATCC 27329 / DSM 1819 / JCM 2831 / NBRC 15690 / NCIMB 10815 / 0-1)).